We begin with the raw amino-acid sequence, 238 residues long: Large ribosomal subunit protein uL5c (238 aa).

The protein belongs to the universal ribosomal protein uL5 family. As to quaternary structure, part of the 50S ribosomal subunit; contacts the 5S rRNA.

It localises to the plastid. The protein resides in the chloroplast. Binds 5S rRNA, forms part of the central protuberance of the 50S subunit. The polypeptide is Large ribosomal subunit protein uL5c (rpl5) (Thalassiosira pseudonana (Marine diatom)).